Consider the following 46-residue polypeptide: Escargot/snail protein homolog (46 aa).

3 consecutive C2H2-type zinc fingers follow at residues 1–4, 8–30, and 36–46; these read IRTH, CKCP…TTHH, and FSCQHCNRAFA.

This sequence belongs to the snail C2H2-type zinc-finger protein family.

It is found in the nucleus. The sequence is that of Escargot/snail protein homolog from Oryzias latipes (Japanese rice fish).